A 437-amino-acid chain; its full sequence is Protein disulfide-isomerase tmx3a (437 aa).

Residues 1-21 form the signal peptide; it reads MANMRNIILTALLSAIALVSG. The region spanning 22-126 is the Thioredoxin domain; that stretch reads YVEGLDDKFT…IIEFTNRVSG (105 aa). At 22-368 the chain is on the extracellular side; sequence YVEGLDDKFT…KNTVMSMVET (347 aa). Residues C48 and C51 each act as nucleophile in the active site. C48 and C51 are joined by a disulfide. The N-linked (GlcNAc...) asparagine glycan is linked to N308. A helical transmembrane segment spans residues 369–389; that stretch reads APVFSCFVLGLPVGVVVLVIY. At 390–437 the chain is on the cytoplasmic side; the sequence is ATCTAVPADDEKPEEEATASPALDTHGKKAIESQPESTEKTSEAKKED. Positions 398–437 are disordered; sequence DDEKPEEEATASPALDTHGKKAIESQPESTEKTSEAKKED. The segment covering 414 to 437 has biased composition (basic and acidic residues); the sequence is THGKKAIESQPESTEKTSEAKKED. The Di-lysine motif motif lies at 434–437; that stretch reads KKED.

It is found in the endoplasmic reticulum membrane. It catalyses the reaction Catalyzes the rearrangement of -S-S- bonds in proteins.. Its function is as follows. Probable disulfide isomerase, which participates in the folding of proteins containing disulfide bonds. May act as a dithiol oxidase. Acts as a regulator of endoplasmic reticulum-mitochondria contact sites via its ability to regulate redox signals. In Danio rerio (Zebrafish), this protein is Protein disulfide-isomerase tmx3a (tmx3a).